The sequence spans 274 residues: MAVTKLDVQYLRKMTGAGVMDCRNALREAEGNYDKAVEVIRKKGKVIASKRESREASEGCVLASSKQGFASIVAVKCETDFVAKGEDFVDMVRKILSVTLENKPRTIEDLNDLFIDGRRICEWITERSGISGEKMELGIYEYLEAPYTVAYVHPGNKLAVIVGFNQVIVKTQVARDVAMQIAAMNPISVDKNSIPAKIVEREEKIAREKAIEQGKPEAILDRIVNGALNKYYKEYTLLLQNFVKDPKITIDDYLKGQSRDLTVIEFRRINLNME.

Residues threonine 79 to valine 82 are involved in Mg(2+) ion dislocation from EF-Tu.

This sequence belongs to the EF-Ts family.

It localises to the cytoplasm. Its function is as follows. Associates with the EF-Tu.GDP complex and induces the exchange of GDP to GTP. It remains bound to the aminoacyl-tRNA.EF-Tu.GTP complex up to the GTP hydrolysis stage on the ribosome. This Azobacteroides pseudotrichonymphae genomovar. CFP2 protein is Elongation factor Ts.